The following is a 708-amino-acid chain: MINPIVKTIELGDGRTITLETGKLAKQADGSVMLRMGNTMLLATVCAAKDAVPGTDFMPLQVEYKEKFAAFGRFPGGFTKREGRASDYEILTCRLVDRALRPLFPDNYHAEVYVNIILFSADGVDMPDALAGLAASAALAVSDIPFNGPISEVRVARIDGKFVINPTFDQLEQADMDIMVAATYENIMMVEGEMSEVSEAELLEAMKVAHEAIKVHCKAQMELTEMVGKTVKREYCHEENDEELRKAVHDACYDKSYAIAASGNRNKHERQDAFDAIRDEFKAQFSEEELEEKGALIDRYYHDVEKEAMRRCILDEGKRLDGRKTTEIRPIWCEVGYLPGPHGSAIFTRGETQSLTSVTLGTKLDEKIIDDVLAHGKERFLLHYNFPPFSTGEAKAQRGVGRREIGHGNLAHRALKRMIPEDYPYVVRVVSDILESNGSSSMATVCAGTLALMDAGVKIKKPVSGIAMGLIKNAGEEKYAVLSDILGDEDHLGDMDFKVTGTKDGITATQMDIKVDGLSYEILERALNQAKEGRMHILGKIEETISEPRTELKDHAPRIETMTIPKEFIGAVIGPGGKIIQGMQEETGATITIEEIDNVGRIEISGTNKKSIDDAIRLIKGIVAVPEVGEVYKGKVRSIMPYGAFVEFLPGKDGLLHISEIDWKRLETVEEAGIKEGDEIEVKLIDIDPKTGKFKLSRKVLLPRPEKK.

Asp-490 and Asp-496 together coordinate Mg(2+). Residues 557–619 form the KH domain; it reads PRIETMTIPK…KSIDDAIRLI (63 aa). Residues 629–699 enclose the S1 motif domain; the sequence is GEVYKGKVRS…KTGKFKLSRK (71 aa).

This sequence belongs to the polyribonucleotide nucleotidyltransferase family. Mg(2+) serves as cofactor.

The protein resides in the cytoplasm. It catalyses the reaction RNA(n+1) + phosphate = RNA(n) + a ribonucleoside 5'-diphosphate. Involved in mRNA degradation. Catalyzes the phosphorolysis of single-stranded polyribonucleotides processively in the 3'- to 5'-direction. The sequence is that of Polyribonucleotide nucleotidyltransferase from Bacteroides fragilis (strain ATCC 25285 / DSM 2151 / CCUG 4856 / JCM 11019 / LMG 10263 / NCTC 9343 / Onslow / VPI 2553 / EN-2).